The following is a 77-amino-acid chain: Small ribosomal subunit protein uS17 (77 aa).

It belongs to the universal ribosomal protein uS17 family. As to quaternary structure, part of the 30S ribosomal subunit.

In terms of biological role, one of the primary rRNA binding proteins, it binds specifically to the 5'-end of 16S ribosomal RNA. The polypeptide is Small ribosomal subunit protein uS17 (Anaplasma marginale (strain St. Maries)).